The chain runs to 320 residues: Cytochrome f (320 aa).

A signal peptide spans 1–35; it reads MQTRNAFSYIKEEITRSISVLLVIYIIIRAPISNA. Heme contacts are provided by Tyr-36, Cys-56, Cys-59, and His-60. The chain crosses the membrane as a helical span at residues 286–305; that stretch reads VQGLLFFLASIIFAQIFLVL.

Belongs to the cytochrome f family. In terms of assembly, the 4 large subunits of the cytochrome b6-f complex are cytochrome b6, subunit IV (17 kDa polypeptide, petD), cytochrome f and the Rieske protein, while the 4 small subunits are PetG, PetL, PetM and PetN. The complex functions as a dimer. It depends on heme as a cofactor.

The protein localises to the plastid. The protein resides in the chloroplast thylakoid membrane. Functionally, component of the cytochrome b6-f complex, which mediates electron transfer between photosystem II (PSII) and photosystem I (PSI), cyclic electron flow around PSI, and state transitions. The chain is Cytochrome f from Lotus japonicus (Lotus corniculatus var. japonicus).